The chain runs to 37 residues: Large ribosomal subunit protein bL36 (37 aa).

This sequence belongs to the bacterial ribosomal protein bL36 family.

This Gloeobacter violaceus (strain ATCC 29082 / PCC 7421) protein is Large ribosomal subunit protein bL36.